A 92-amino-acid chain; its full sequence is YcgL domain-containing protein Sputcn32_1766 (92 aa).

The YcgL domain maps to 1–85; it reads MLCTVYKSTR…PQVNLLAEHK (85 aa).

In Shewanella putrefaciens (strain CN-32 / ATCC BAA-453), this protein is YcgL domain-containing protein Sputcn32_1766.